We begin with the raw amino-acid sequence, 634 residues long: RING finger protein 207 (634 aa).

The segment at Cys25–Gln64 adopts an RING-type zinc-finger fold. The segment at Val93 to Leu145 adopts a B box-type; atypical zinc-finger fold. Cys98, Cys101, Cys127, and His132 together coordinate Zn(2+). 2 coiled-coil regions span residues Glu422–Ser457 and Glu494–Leu518. Residues Phe552–Thr634 form a disordered region.

Interacts with the core-glycosylated, but not the fully glycosylated form of KCNH2/HERG. Interacts with DNAJA1 and HSPA8. Interacts (via the C-terminus) with HSPA1A; this interaction additively increases KCNH2 expression.

Its subcellular location is the cytoplasm. In terms of biological role, plays a role in cardiac repolarization possibly by stabilizing membrane expression of the potassium channel KCNH2/HERG, or by assisting its synthesis, folding or export from the endoplasmic reticulum, in a heat shock protein-dependent manner. This Homo sapiens (Human) protein is RING finger protein 207 (RNF207).